The chain runs to 525 residues: Bestrophin homolog 15 (525 aa).

Helical transmembrane passes span 36–56 (LFMFIIAFITVSSVYRSNLII), 71–91 (FDQNMDFIPLTFMLGFFVTII), 237–257 (LAYPQVVFLAVRSYFFMALIA), and 273–293 (ILYPTVPFVMSILQFIFVVGW).

The protein belongs to the anion channel-forming bestrophin (TC 1.A.46) family. Calcium-sensitive chloride channel subfamily. As to quaternary structure, forms oligomers.

The protein resides in the cell membrane. In terms of biological role, forms chloride channels. This is Bestrophin homolog 15 (best-15) from Caenorhabditis elegans.